The chain runs to 639 residues: ATP-dependent zinc metalloprotease FtsH (639 aa).

Residues 1–4 lie on the Cytoplasmic side of the membrane; that stretch reads MNST. The helical transmembrane segment at 5–25 threads the bilayer; the sequence is VKTIVFWVFILACCILLWQVF. At 26–104 the chain is on the periplasmic side; it reads QRSSNTGKEQ…TVKDNSGSPW (79 aa). Residues 105–125 form a helical membrane-spanning segment; sequence WSILIQFSPVLVLVALWFFMI. The Cytoplasmic segment spans residues 126–639; the sequence is RQMQSGGNKA…GLPEGSPSPA (514 aa). 196–203 provides a ligand contact to ATP; the sequence is GPPGTGKT. His-418 lines the Zn(2+) pocket. Residue Glu-419 is part of the active site. Residues His-422 and Asp-494 each contribute to the Zn(2+) site. The interval 597–639 is disordered; the sequence is KDLPPLKPSGGSGTATTDDVQQVLKPSSDRGAGGLPEGSPSPA.

It in the central section; belongs to the AAA ATPase family. In the C-terminal section; belongs to the peptidase M41 family. Homohexamer. Requires Zn(2+) as cofactor.

Its subcellular location is the cell inner membrane. In terms of biological role, acts as a processive, ATP-dependent zinc metallopeptidase for both cytoplasmic and membrane proteins. Plays a role in the quality control of integral membrane proteins. This Acidobacterium capsulatum (strain ATCC 51196 / DSM 11244 / BCRC 80197 / JCM 7670 / NBRC 15755 / NCIMB 13165 / 161) protein is ATP-dependent zinc metalloprotease FtsH.